Consider the following 396-residue polypeptide: Tryptophan synthase beta chain (396 aa).

An N6-(pyridoxal phosphate)lysine modification is found at lysine 88.

Belongs to the TrpB family. Tetramer of two alpha and two beta chains. It depends on pyridoxal 5'-phosphate as a cofactor.

It carries out the reaction (1S,2R)-1-C-(indol-3-yl)glycerol 3-phosphate + L-serine = D-glyceraldehyde 3-phosphate + L-tryptophan + H2O. It participates in amino-acid biosynthesis; L-tryptophan biosynthesis; L-tryptophan from chorismate: step 5/5. Its function is as follows. The beta subunit is responsible for the synthesis of L-tryptophan from indole and L-serine. This is Tryptophan synthase beta chain from Shewanella sp. (strain ANA-3).